The sequence spans 274 residues: Sulfur carrier protein FdhD (274 aa).

The active-site Cysteine persulfide intermediate is the Cys-121. Residue 258-263 (FSKPGR) coordinates Mo-bis(molybdopterin guanine dinucleotide).

This sequence belongs to the FdhD family.

It localises to the cytoplasm. Its function is as follows. Required for formate dehydrogenase (FDH) activity. Acts as a sulfur carrier protein that transfers sulfur from IscS to the molybdenum cofactor prior to its insertion into FDH. The sequence is that of Sulfur carrier protein FdhD from Yersinia pseudotuberculosis serotype IB (strain PB1/+).